The following is a 308-amino-acid chain: S-crystallin SL18 (308 aa).

One can recognise a GST N-terminal domain in the interval 2–80 (PKYTLYYFNS…YLARQFGFYG (79 aa)). The segment at 165 to 205 (EMRSQDSMVEPPSQKLSPELESQSSLCSERPQCGPPDPMMG) is disordered. Residues 178–191 (QKLSPELESQSSLC) are compositionally biased toward polar residues. One can recognise a GST C-terminal domain in the interval 185-308 (ESQSSLCSER…YFTLRNYTDF (124 aa)).

Belongs to the GST superfamily. In terms of tissue distribution, lens.

In terms of biological role, S-crystallins are structural components of squids and octopi eye lens. Contains relatively little if any GST activity. The polypeptide is S-crystallin SL18 (Nototodarus sloanii (Wellington flying squid)).